The following is a 305-amino-acid chain: DNA-directed RNA polymerase 35 kDa subunit (305 aa).

This sequence belongs to the poxviridae DNA-directed RNA polymerase 35 kDa subunit family. In terms of assembly, the DNA-dependent RNA polymerase used for intermediate and late genes expression consists of eight subunits 147 kDa, 133 kDa, 35 kDa, 30 kDa, 22 kDa, 19 kDa, 18 kDa and 7 kDa totalling more than 500 kDa in mass. The same holoenzyme, with the addition of the transcription-specificity factor RAP94, is used for early gene expression.

Its subcellular location is the virion. It catalyses the reaction RNA(n) + a ribonucleoside 5'-triphosphate = RNA(n+1) + diphosphate. Part of the DNA-dependent RNA polymerase which catalyzes the transcription of viral DNA into RNA using the four ribonucleoside triphosphates as substrates. Responsible for the transcription of early, intermediate and late genes. DNA-dependent RNA polymerase associates with the early transcription factor (ETF) thereby allowing the early genes transcription. Late transcription, and probably also intermediate transcription, require newly synthesized RNA polymerase. The sequence is that of DNA-directed RNA polymerase 35 kDa subunit (RPO35) from Rabbitpox virus (strain Utrecht) (RPV).